A 111-amino-acid chain; its full sequence is Ribonuclease P protein component (111 aa).

It belongs to the RnpA family. Consists of a catalytic RNA component (M1 or rnpB) and a protein subunit.

The catalysed reaction is Endonucleolytic cleavage of RNA, removing 5'-extranucleotides from tRNA precursor.. Its function is as follows. RNaseP catalyzes the removal of the 5'-leader sequence from pre-tRNA to produce the mature 5'-terminus. It can also cleave other RNA substrates such as 4.5S RNA. The protein component plays an auxiliary but essential role in vivo by binding to the 5'-leader sequence and broadening the substrate specificity of the ribozyme. In Alkaliphilus metalliredigens (strain QYMF), this protein is Ribonuclease P protein component.